Here is a 610-residue protein sequence, read N- to C-terminus: Threonine--tRNA ligase (610 aa).

Positions 1 to 29 (MANHDQQTVSSAAATTSASPSPVVLPKTS) are disordered. Residues 8-24 (TVSSAAATTSASPSPVV) are compositionally biased toward low complexity. The catalytic stretch occupies residues 209 to 502 (DHRRIGKDLD…MTENYAGDYP (294 aa)). Cys-302, His-353, and His-479 together coordinate Zn(2+).

This sequence belongs to the class-II aminoacyl-tRNA synthetase family. In terms of assembly, homodimer. The cofactor is Zn(2+).

It is found in the cytoplasm. It carries out the reaction tRNA(Thr) + L-threonine + ATP = L-threonyl-tRNA(Thr) + AMP + diphosphate + H(+). Functionally, catalyzes the attachment of threonine to tRNA(Thr) in a two-step reaction: L-threonine is first activated by ATP to form Thr-AMP and then transferred to the acceptor end of tRNA(Thr). Also edits incorrectly charged L-seryl-tRNA(Thr). In Synechococcus sp. (strain WH7803), this protein is Threonine--tRNA ligase.